The primary structure comprises 895 residues: MATEHPEPPKAELQLPPPPPPGHYGAWAAQELQAKLAEIGAPIQGNREELVERLQSYTRQTGIVLNRPVLRGEDGDKAAPPPMSAQLPGIPMPPPPLGLPPLQPPPPPPPPPPGLGLGFPMAHPPNLGPPPPLRVGEPVALSEEERLKLAQQQAALLMQQEERAKQQGDHSLKEHELLEQQKRAAVLLEQERQQEIAKMGTPVPRPPQDMGQIGVRTPLGPRVAAPVGPVGPTPTVLPMGAPVPRPRGPPPPPGDENREMDDPSVGPKIPQALEKILQLKESRQEEMNSQQEEEEMETDARSSLGQSASETEEDTVSVSKKEKNRKRRNRKKKKKPQRVRGVSSESSGDREKDSTRSRGSDSPAADVEIEYVTEEPEIYEPNFIFFKRIFEAFKLTDDVKKEKEKEPEKLDKLENSAAPKKKGFEEEHKDSDDDSSDDEQEKKPEAPKLSKKKLRRMNRFTVAELKQLVARPDVVEMHDVTAQDPKLLVHLKATRNSVPVPRHWCFKRKYLQGKRGIEKPPFELPDFIKRTGIQEMREALQEKEEQKTMKSKMREKVRPKMGKIDIDYQKLHDAFFKWQTKPKLTIHGDLYYEGKEFETRLKEKKPGDLSDELRISLGMPVGPNAHKVPPPWLIAMQRYGPPPSYPNLKIPGLNSPIPESCSFGYHAGGWGKPPVDETGKPLYGDVFGTNAAEFQTKTEEEEIDRTPWGELEPSDEESSEEEEEEESDEDKPDETGFITPADSGLITPGGFSSVPAGMETPELIELRKKKIEEAMDGSETPQLFTVLPEKRTATVGGAMMGSTHIYDMSTVMSRKGPAPELQGVEVALAPEELELDPMAMTQKYEEHVREQQAQVEKEDFSDMVAEHAAKQKQKKRKAQPQDSRGGSKKYKEFKF.

Residues M1 to K10 are compositionally biased toward basic and acidic residues. Disordered regions lie at residues M1–Y24, L65–G136, A197–T373, and K400–K453. Residue K10 forms a Glycyl lysine isopeptide (Lys-Gly) (interchain with G-Cter in SUMO2) linkage. The SAP domain occupies Y24–T58. Pro residues-rich tracts occupy residues I90–G114 and A122–L133. The stretch at A140–M199 forms a coiled coil. The segment covering P218–P238 has biased composition (low complexity). Omega-N-methylarginine is present on residues R222, R245, and R247. Positions A241–G254 are enriched in pro residues. Position 275 is an N6-acetyllysine (K275). Over residues L277–E286 the composition is skewed to basic and acidic residues. Residue K280 forms a Glycyl lysine isopeptide (Lys-Gly) (interchain with G-Cter in SUMO2) linkage. S289 bears the Phosphoserine mark. Position 298 is a phosphothreonine (T298). A phosphoserine mark is found at S307 and S309. T311 carries the phosphothreonine modification. S317 carries the post-translational modification Phosphoserine. The span at E322–R338 shows a compositional bias: basic residues. A compositionally biased stretch (basic and acidic residues) spans S347–G359. Residues S360 and S362 each carry the phosphoserine modification. Glycyl lysine isopeptide (Lys-Gly) (interchain with G-Cter in SUMO2) cross-links involve residues K400 and K412. 2 stretches are compositionally biased toward basic and acidic residues: residues K400–E414 and K422–S431. The required for interaction with PRMT9 stretch occupies residues K401–K550. 3 positions are modified to phosphoserine: S431, S435, and S436. K492 is covalently cross-linked (Glycyl lysine isopeptide (Lys-Gly) (interchain with G-Cter in SUMO2)). R508 is modified (omega-N-methylarginine; by PRMT9; alternate). Position 508 is a symmetric dimethylarginine; by PRMT9; alternate (R508). An Omega-N-methylarginine modification is found at R515. K543 is covalently cross-linked (Glycyl lysine isopeptide (Lys-Gly) (interchain with G-Cter in SUMO2)). The segment at A691–G757 is disordered. Residues E712–P732 show a composition bias toward acidic residues. Residue K770 forms a Glycyl lysine isopeptide (Lys-Gly) (interchain with G-Cter in SUMO2) linkage. T780 is subject to Phosphothreonine. Residues K790, K843, and K857 each participate in a glycyl lysine isopeptide (Lys-Gly) (interchain with G-Cter in SUMO2) cross-link. The segment covering Y844–A869 has biased composition (basic and acidic residues). The disordered stretch occupies residues Y844–F895. Residue S861 is modified to Phosphoserine.

As to quaternary structure, component of the 17S U2 SnRNP complex, a ribonucleoprotein complex that contains small nuclear RNA (snRNA) U2 and a number of specific proteins. Part of the SF3B subcomplex of the 17S U2 SnRNP complex. SF3B associates with the splicing subcomplex SF3A and a 12S RNA unit to form the U2 small nuclear ribonucleoproteins complex (U2 snRNP). Within the SF3B complex, interacts directly with SF3B4. Found in a complex with PRMT9, SF3B2 and SF3B4. Interacts (Arg-508-methylated form) with SMN1 (via Tudor domain). Interacts with RBM7. Interacts with ERCC6. Component of the minor spliceosome. Within this complex, interacts with SCNM1 and CRIPT. (Microbial infection) Interacts with HIV-1 Vpr. In terms of processing, methylation at Arg-508 by PRMT9 is required for the interaction with SMN1.

The protein resides in the nucleus. Its subcellular location is the nucleus speckle. Component of the 17S U2 SnRNP complex of the spliceosome, a large ribonucleoprotein complex that removes introns from transcribed pre-mRNAs. The 17S U2 SnRNP complex (1) directly participates in early spliceosome assembly and (2) mediates recognition of the intron branch site during pre-mRNA splicing by promoting the selection of the pre-mRNA branch-site adenosine, the nucleophile for the first step of splicing. Within the 17S U2 SnRNP complex, SF3B2 is part of the SF3B subcomplex, which is required for 'A' complex assembly formed by the stable binding of U2 snRNP to the branchpoint sequence in pre-mRNA. Sequence independent binding of SF3A and SF3B subcomplexes upstream of the branch site is essential, it may anchor U2 snRNP to the pre-mRNA. May also be involved in the assembly of the 'E' complex. Also acts as a component of the minor spliceosome, which is involved in the splicing of U12-type introns in pre-mRNAs. The chain is Splicing factor 3B subunit 2 (SF3B2) from Homo sapiens (Human).